A 399-amino-acid chain; its full sequence is MSKGKLSERISHFNIVEELKSKGLYAYFRPIQSKQDTEVMIDGKRVLMFGSNSYLGLTIDPRIIEAAQDALSKYGTGCAGSRFLNGTLDIHIELEHKLSQLVGKEASILFSTGFQSNLGPISCLMGRNDYILLDERDHASIIDGSRLSFSKVIKYGHNDMDDLRAKLSRLPSESAKLIVTDGIFSMEGDIVNLPEMVKIADEYDAALMVDDAHSLGVIGEHGAGTASHFGLTDKVDLIMGTFSKSLASLGGFVAGDADVIDYLKHNARSVMFSASMTPASVASTLKALEIMISEPEHMENLWKNTNYAKQQLLESGFDLGATESPILPIFIRNNEKTFWVTKMLQDDGVFVNPVVSPAVPSEESLIRFSLMATHTFDQIDEAVEKMVRVFKQAEIESLI.

Pyridoxal 5'-phosphate contacts are provided by residues 113–114 (GF), H213, T241, and S243. K244 carries the N6-(pyridoxal phosphate)lysine modification.

The protein belongs to the class-II pyridoxal-phosphate-dependent aminotransferase family. Homodimer. The cofactor is pyridoxal 5'-phosphate.

It is found in the cytoplasm. It catalyses the reaction L-serine + hexadecanoyl-CoA + H(+) = 3-oxosphinganine + CO2 + CoA. Its pathway is lipid metabolism; sphingolipid metabolism. Catalyzes the condensation of L-serine with palmitoyl-CoA (hexadecanoyl-CoA) to produce 3-oxosphinganine. In Sphingobacterium spiritivorum (Flavobacterium spiritivorum), this protein is Serine palmitoyltransferase.